A 123-amino-acid polypeptide reads, in one-letter code: uncharacterized protein (123 aa).

The interval proline 34–glutamate 123 is disordered. Composition is skewed to basic and acidic residues over residues lysine 50–proline 60, threonine 74–glutamine 100, and glutamate 107–glutamate 123.

It is found in the mitochondrion. This is an uncharacterized protein from Schizosaccharomyces pombe (strain 972 / ATCC 24843) (Fission yeast).